Consider the following 238-residue polypeptide: 7-cyano-7-deazaguanine synthase (238 aa).

Position 12-22 (F12–L22) interacts with ATP. C200, C215, C218, and C221 together coordinate Zn(2+).

It belongs to the QueC family. Zn(2+) is required as a cofactor.

It catalyses the reaction 7-carboxy-7-deazaguanine + NH4(+) + ATP = 7-cyano-7-deazaguanine + ADP + phosphate + H2O + H(+). The protein operates within purine metabolism; 7-cyano-7-deazaguanine biosynthesis. Functionally, catalyzes the ATP-dependent conversion of 7-carboxy-7-deazaguanine (CDG) to 7-cyano-7-deazaguanine (preQ(0)). In Lawsonia intracellularis (strain PHE/MN1-00), this protein is 7-cyano-7-deazaguanine synthase.